The sequence spans 227 residues: Uracil-DNA glycosylase (227 aa).

The active-site Proton acceptor is the aspartate 64.

It belongs to the uracil-DNA glycosylase (UDG) superfamily. UNG family.

Its subcellular location is the cytoplasm. It carries out the reaction Hydrolyzes single-stranded DNA or mismatched double-stranded DNA and polynucleotides, releasing free uracil.. Functionally, excises uracil residues from the DNA which can arise as a result of misincorporation of dUMP residues by DNA polymerase or due to deamination of cytosine. The sequence is that of Uracil-DNA glycosylase from Sodalis glossinidius (strain morsitans).